The primary structure comprises 371 residues: Carbamoyl phosphate synthase small chain (371 aa).

Positions 1–182 (MGVHKKGYLV…KNPIVHTPKN (182 aa)) are CPSase. Positions 49, 235, and 237 each coordinate L-glutamine. A Glutamine amidotransferase type-1 domain is found at 186–371 (RVVVLDLGVK…EFVKILEGRK (186 aa)). The active-site Nucleophile is the Cys-263. Residues Leu-264, Gln-267, Asn-305, Gly-307, and Tyr-308 each contribute to the L-glutamine site. Residues His-346 and Glu-348 contribute to the active site.

The protein belongs to the CarA family. Composed of two chains; the small (or glutamine) chain promotes the hydrolysis of glutamine to ammonia, which is used by the large (or ammonia) chain to synthesize carbamoyl phosphate. Tetramer of heterodimers (alpha,beta)4.

The enzyme catalyses hydrogencarbonate + L-glutamine + 2 ATP + H2O = carbamoyl phosphate + L-glutamate + 2 ADP + phosphate + 2 H(+). It carries out the reaction L-glutamine + H2O = L-glutamate + NH4(+). Its pathway is amino-acid biosynthesis; L-arginine biosynthesis; carbamoyl phosphate from bicarbonate: step 1/1. The protein operates within pyrimidine metabolism; UMP biosynthesis via de novo pathway; (S)-dihydroorotate from bicarbonate: step 1/3. Functionally, small subunit of the glutamine-dependent carbamoyl phosphate synthetase (CPSase). CPSase catalyzes the formation of carbamoyl phosphate from the ammonia moiety of glutamine, carbonate, and phosphate donated by ATP, constituting the first step of 2 biosynthetic pathways, one leading to arginine and/or urea and the other to pyrimidine nucleotides. The small subunit (glutamine amidotransferase) binds and cleaves glutamine to supply the large subunit with the substrate ammonia. This Pyrococcus furiosus (strain ATCC 43587 / DSM 3638 / JCM 8422 / Vc1) protein is Carbamoyl phosphate synthase small chain.